A 221-amino-acid polypeptide reads, in one-letter code: UPF0502 protein PLES_16071 (221 aa).

Belongs to the UPF0502 family.

In Pseudomonas aeruginosa (strain LESB58), this protein is UPF0502 protein PLES_16071.